A 115-amino-acid polypeptide reads, in one-letter code: Putative TGFB1-induced anti-apoptotic factor 1 (115 aa).

As to expression, not detectable in normal kidney and liver. Up-regulated in chronic and acute allograft rejection: expressed in the inflammatory infiltrate and in tubular epithelial cells.

It localises to the nucleus. Its function is as follows. Inhibits the cytotoxic effects of TNF-alpha and overexpressed TNF receptor adapters TRADD, FADD, and RIPK1. Involved in TGF-beta1 inhibition of IkappaB-alpha expression and suppression of TNF-mediated IkappaB-alpha degradation. The chain is Putative TGFB1-induced anti-apoptotic factor 1 (MYO18A) from Homo sapiens (Human).